Consider the following 263-residue polypeptide: Small ribosomal subunit protein uS15m (263 aa).

Residues 1–70 (MVLKSVFRST…VRQYARPSRK (70 aa)) constitute a mitochondrion transit peptide. Positions 238-251 (EREKQKAEEAERKK) are enriched in basic and acidic residues. Residues 238–263 (EREKQKAEEAERKKSSSSTNPQETAA) are disordered.

The protein belongs to the universal ribosomal protein uS15 family. As to quaternary structure, component of the mitochondrial ribosome small subunit (28S) which comprises a 12S rRNA and about 30 distinct proteins.

It is found in the mitochondrion. The polypeptide is Small ribosomal subunit protein uS15m (mrps15) (Danio rerio (Zebrafish)).